The following is a 236-amino-acid chain: MRYNCRYSHIDKKIYSMIICLSFLLYSNVVQANSYNTTNRHNLESLYKHDSNLIEADSIKNSPDIVTSHMLKYSVKDKNLSVFFEKDWISQEFKDKEVDIYALSAQEVCECPGKRYEAFGGITLTNSEKKEIKVPVNVWDKSKQQPPMFITVNKPKVTAQEVDIKVRKLLIKKYDIYNNREQKYSKGTVTLDLNSGKDIVFDLYYFGNGDFNSMLKIYSNNERIDSTQFHVDVSIS.

Positions 1-32 are cleaved as a signal peptide; sequence MRYNCRYSHIDKKIYSMIICLSFLLYSNVVQA.

It belongs to the staphylococcal/streptococcal toxin family.

The protein localises to the secreted. Functionally, mitogenic for human peripheral blood lymphocytes. The polypeptide is Exotoxin type H (speH) (Streptococcus pyogenes serotype M1).